Reading from the N-terminus, the 181-residue chain is Ribosome-recycling factor (181 aa).

Positions methionine 135–threonine 160 are disordered.

This sequence belongs to the RRF family.

The protein localises to the cytoplasm. Its function is as follows. Responsible for the release of ribosomes from messenger RNA at the termination of protein biosynthesis. May increase the efficiency of translation by recycling ribosomes from one round of translation to another. The chain is Ribosome-recycling factor from Leuconostoc mesenteroides subsp. mesenteroides (strain ATCC 8293 / DSM 20343 / BCRC 11652 / CCM 1803 / JCM 6124 / NCDO 523 / NBRC 100496 / NCIMB 8023 / NCTC 12954 / NRRL B-1118 / 37Y).